The chain runs to 341 residues: Cysteine and histidine-rich domain-containing protein 1 (341 aa).

Residues Cys-5, Cys-10, Cys-24, His-27, Cys-42, Cys-43, Cys-59, His-64, Cys-155, Cys-160, Cys-174, His-177, Cys-192, Cys-193, Cys-209, and His-214 each coordinate Zn(2+). CHORD domains are found at residues 5–64 and 155–214; these read CYNK…KGPH and CKNG…RGKH. Positions 61–81 are disordered; the sequence is KGPHNQEKPAEPVKPEVKSSL. Basic and acidic residues predominate over residues 64–81; that stretch reads HNQEKPAEPVKPEVKSSL. The 90-residue stretch at 225 to 314 folds into the CS domain; that stretch reads VVPCRFDWHQ…AEPMSWARLD (90 aa). Positions 313 to 341 are disordered; it reads LDLPPVAPPKEKEKEKDVDSEDECDDDED. Over residues 330–341 the composition is skewed to acidic residues; sequence VDSEDECDDDED.

Functionally, regulates centrosome duplication. The chain is Cysteine and histidine-rich domain-containing protein 1 (chordc1) from Danio rerio (Zebrafish).